The sequence spans 122 residues: UPF0231 protein VSAL_I2591 (122 aa).

The protein belongs to the UPF0231 family.

The chain is UPF0231 protein VSAL_I2591 from Aliivibrio salmonicida (strain LFI1238) (Vibrio salmonicida (strain LFI1238)).